The chain runs to 308 residues: Ornithine carbamoyltransferase (308 aa).

Carbamoyl phosphate is bound by residues 53–56 (STRT), Gln80, Arg104, and 131–134 (HPCQ). L-ornithine-binding positions include Asn162, Asp225, and 229–230 (SM). Residues 265–266 (CL) and Arg293 each bind carbamoyl phosphate.

This sequence belongs to the aspartate/ornithine carbamoyltransferase superfamily. OTCase family.

It is found in the cytoplasm. The catalysed reaction is carbamoyl phosphate + L-ornithine = L-citrulline + phosphate + H(+). It functions in the pathway amino-acid biosynthesis; L-arginine biosynthesis; L-arginine from L-ornithine and carbamoyl phosphate: step 1/3. Its function is as follows. Reversibly catalyzes the transfer of the carbamoyl group from carbamoyl phosphate (CP) to the N(epsilon) atom of ornithine (ORN) to produce L-citrulline. The chain is Ornithine carbamoyltransferase (argF) from Synechocystis sp. (strain ATCC 27184 / PCC 6803 / Kazusa).